A 248-amino-acid polypeptide reads, in one-letter code: PF03932 family protein CutC (248 aa).

This sequence belongs to the CutC family. In terms of assembly, homodimer.

It is found in the cytoplasm. This chain is PF03932 family protein CutC, found in Escherichia coli O7:K1 (strain IAI39 / ExPEC).